Consider the following 396-residue polypeptide: Ribosomal RNA large subunit methyltransferase G (396 aa).

This sequence belongs to the methyltransferase superfamily. RlmG family.

The protein resides in the cytoplasm. The catalysed reaction is guanosine(1835) in 23S rRNA + S-adenosyl-L-methionine = N(2)-methylguanosine(1835) in 23S rRNA + S-adenosyl-L-homocysteine + H(+). In terms of biological role, specifically methylates the guanine in position 1835 (m2G1835) of 23S rRNA. This is Ribosomal RNA large subunit methyltransferase G from Yersinia enterocolitica serotype O:8 / biotype 1B (strain NCTC 13174 / 8081).